Consider the following 584-residue polypeptide: Keratin, type I cytoskeletal 10 (584 aa).

Low complexity predominate over residues 1 to 15; it reads MSVRYSSSKHYSSSR. The interval 1-24 is disordered; the sequence is MSVRYSSSKHYSSSRSGGGGGGGG. The interval 1–145 is head; sequence MSVRYSSSKH…GGDGGLLSGN (145 aa). 6 positions are modified to phosphoserine: Ser14, Ser16, Ser42, Ser53, Ser56, and Ser170. The coil 1A stretch occupies residues 146–181; that stretch reads EKVTMQNLNDRLASYLDKVRALEESNYELEGKIKEW. Positions 146-460 constitute an IF rod domain; that stretch reads EKVTMQNLND…SLLEGEGSSG (315 aa). The tract at residues 182–202 is linker 1; that stretch reads YEKHGNSHQGEPRDYSKYYKT. Residues 203 to 294 are coil 1B; that stretch reads IDDLKNQILN…KNHEEEMKDL (92 aa). Residues 295-317 are linker 12; that stretch reads RNVSTGDVNVEMNAAPGVDLTQL. The interval 318–456 is coil 2; it reads LNNMRSQYEQ…QTYRSLLEGE (139 aa). Positions 453-584 are disordered; that stretch reads LEGEGSSGGG…GESSSKGPRY (132 aa). The span at 457–563 shows a compositional bias: gly residues; sequence GSSGGGGRGG…GGGYGGGSSS (107 aa). Residues 457–584 are tail; it reads GSSGGGGRGG…GESSSKGPRY (128 aa). The span at 564-584 shows a compositional bias: low complexity; that stretch reads GGHKSSSSGSVGESSSKGPRY.

It belongs to the intermediate filament family. Heterotetramer of two type I and two type II keratins. Heterodimer with KRT1. Two heterodimers of KRT1 and KRT10 form a heterotetramer. The KRT10 subunit in the heterotetramer is probably disulfide-linked. Interacts with PLEC isoform 1C, when in a heterodimer with KRT1. As to quaternary structure, (Microbial infection) Interacts (via C-terminal tail domain) with the S.aureus clumping factor, clfB; this interaction probably mediates S.aureus attachment to the keratinized squamous epithelial cells from the nasal cavity. In terms of assembly, (Microbial infection) Interacts (via the C-terminal tail domain) with S.pneumoniae serine-rich repeat protein PsrP; this interaction probably mediates S.pneumoniae adherence to lung tissue and subsequent pathogenesis. Neither protein has to be glycosylated for the interaction to occur. As to expression, seen in all suprabasal cell layers including stratum corneum. Expressed on the surface of lung cell lines. Localized on the surface of desquamated nasal epithelial cells (at protein level).

The protein resides in the secreted. It localises to the extracellular space. Its subcellular location is the cell surface. It is found in the cytoplasm. In terms of biological role, plays a role in the establishment of the epidermal barrier on plantar skin. Involved in the maintenance of cell layer development and keratin filament bundles in suprabasal cells of the epithelium. Its function is as follows. (Microbial infection) Acts as a mediator of S.aureus adherence to desquamated nasal epithelial cells via clfB, and hence may play a role in nasal colonization. (Microbial infection) Binds S.pneumoniae PsrP, mediating adherence of the bacteria to lung cell lines. Reduction of levels of KRT10 keratin decrease adherence, overexpression increases adherence. Neither protein has to be glycosylated for the interaction to occur. This chain is Keratin, type I cytoskeletal 10 (KRT10), found in Homo sapiens (Human).